Here is an 834-residue protein sequence, read N- to C-terminus: ATP-dependent RNA helicase ddx23 (834 aa).

2 disordered regions span residues 1 to 245 (MDPP…TQFS) and 322 to 371 (FGGY…GKQI). Residues 10–25 (SKRDTKKKDEVNKEQP) show a composition bias toward basic and acidic residues. A compositionally biased stretch (polar residues) spans 42-54 (SNPTQEEPTNTLQ). 4 stretches are compositionally biased toward basic and acidic residues: residues 70 to 110 (GLKE…DYRD), 117 to 164 (GRDR…RRDG), 171 to 205 (RRRD…RDND), and 231 to 245 (DIHK…TQFS). Residues 328–362 (NNNNNGNHYNGNIYNNNNNNNNNNNNNNNINNNNN) show a composition bias toward low complexity. The Q motif signature appears at 413–441 (RTWQESNLPREILEAIRQLGYEKPSPIQM). The region spanning 444 to 643 (IPISLTGRDI…KKYLRRPCTI (200 aa)) is the Helicase ATP-binding domain. Position 457–464 (457–464 (AETGSGKT)) interacts with ATP. A DEAD box motif is present at residues 570 to 573 (DEAD). The region spanning 654 to 815 (RIRQTVIFVK…IVPIELLKHP (162 aa)) is the Helicase C-terminal domain. The disordered stretch occupies residues 813–834 (KHPSSQQKHGSSKDHNKSVIFK). Residues 823–834 (SSKDHNKSVIFK) show a composition bias toward basic and acidic residues.

The protein belongs to the DEAD box helicase family. DDX23/PRP28 subfamily.

It is found in the cytoplasm. The protein localises to the nucleus. It catalyses the reaction ATP + H2O = ADP + phosphate + H(+). Probable ATP-dependent RNA helicase which may be involved in mRNA splicing. This is ATP-dependent RNA helicase ddx23 (helB2) from Dictyostelium discoideum (Social amoeba).